The chain runs to 289 residues: Oxaloacetate decarboxylase (289 aa).

Ser47 is a substrate binding site. Asp85 lines the Mg(2+) pocket. Residues Arg156 and His232 each coordinate substrate.

The protein belongs to the isocitrate lyase/PEP mutase superfamily. Oxaloacetate decarboxylase family. As to quaternary structure, homotetramer; dimer of dimers. The cofactor is Mg(2+).

The enzyme catalyses oxaloacetate + H(+) = pyruvate + CO2. In terms of biological role, catalyzes the decarboxylation of oxaloacetate into pyruvate. Seems to play a role in maintaining cellular concentrations of bicarbonate and pyruvate. This is Oxaloacetate decarboxylase from Rhodopseudomonas palustris (strain HaA2).